A 298-amino-acid chain; its full sequence is ADP/ATP translocase 2 (298 aa).

An N-acetylmethionine modification is found at methionine 1. Residues 1–7 (MTDAAVS) are Mitochondrial intermembrane-facing. Threonine 2 carries the post-translational modification N-acetylthreonine; in ADP/ATP translocase 2, N-terminally processed. The stretch at 6–98 (VSFAKDFLAG…FAFKDKYKQI (93 aa)) is one Solcar 1 repeat. A Phosphoserine modification is found at serine 7. Residues 8–37 (FAKDFLAGGVAAAISKTAVAPIERVKLLLQ) traverse the membrane as a helical segment. An N6-malonyllysine modification is found at lysine 23. Residues 38–74 (VQHASKQITADKQYKGIMDCVVRIPKEQGVLSFWRGN) lie on the Mitochondrial matrix side of the membrane. Lysine 43 bears the N6-succinyllysine mark. Lysine 52 carries the post-translational modification N6,N6,N6-trimethyllysine; alternate. An N6,N6-dimethyllysine; alternate modification is found at lysine 52. The residue at position 52 (lysine 52) is an N6-methyllysine; alternate. Residues 75–99 (LANVIRYFPTQALNFAFKDKYKQIF) traverse the membrane as a helical segment. ADP-binding residues include arginine 80 and lysine 92. An N6-malonyllysine mark is found at lysine 92 and lysine 96. Residues 100 to 109 (LGGVDKRTQF) lie on the Mitochondrial intermembrane side of the membrane. Lysine 105 is modified (N6-acetyllysine; alternate). Lysine 105 is subject to N6-succinyllysine; alternate. Residues 110–130 (WRYFAGNLASGGAAGATSLCF) traverse the membrane as a helical segment. Solcar repeat units follow at residues 111 to 201 (RYFA…AKGM) and 212 to 297 (ISWM…IKKY). At 131–178 (VYPLDFARTRLAADVGKAGDAREFKGLGDCLVKITKSDGIRGLYQGFN) the chain is on the mitochondrial matrix side. Lysine 147 bears the N6-methyllysine; alternate mark. N6-acetyllysine; alternate occurs at positions 147 and 155. Lysine 147 and lysine 155 each carry N6-succinyllysine; alternate. Lysine 147 carries the N6-malonyllysine; alternate modification. Lysine 163 and lysine 166 each carry N6-acetyllysine. Residues 179 to 199 (VSVQGIIIYRAAYFGIYDTAK) form a helical membrane-spanning segment. Topologically, residues 200-210 (GMLPDPKNTHI) are mitochondrial intermembrane. A helical transmembrane segment spans residues 211–231 (FISWMIAQSVTAVAGLTSYPF). Residues 232-273 (DTVRRRMMMQSGRKGSDIMYTGTIDCWKKIARDEGSKAFFKG) are Mitochondrial matrix-facing. Arginine 235 contacts ADP. The interval 235-240 (RRRMMM) is important for transport activity. The short motif at 235–240 (RRRMMM) is the Nucleotide carrier signature motif element. At lysine 268 the chain carries N6-acetyllysine; alternate. Lysine 268 bears the N6-succinyllysine; alternate mark. Residues 274–291 (AWSNVLRGMGGAFVLVLY) traverse the membrane as a helical segment. Residues 292 to 298 (DEIKKYT) lie on the Mitochondrial intermembrane side of the membrane.

This sequence belongs to the mitochondrial carrier (TC 2.A.29) family. As to quaternary structure, monomer. Component of the MMXD complex, which includes CIAO1, ERCC2, CIAO2B, MMS19 and SLC25A5/ANT2. Interacts with AK4. Interacts with TIMM44; leading to inhibit the presequence translocase TIMM23, thereby promoting stabilization of PINK1. Post-translationally, trimethylated by ANTKMT at Lys-52.

It is found in the mitochondrion inner membrane. The protein localises to the membrane. It carries out the reaction ADP(in) + ATP(out) = ADP(out) + ATP(in). The catalysed reaction is H(+)(in) = H(+)(out). The matrix-open state (m-state) is inhibited by the membrane-permeable bongkrekic acid (BKA). The cytoplasmic-open state (c-state) is inhibited by the membrane-impermeable toxic inhibitor carboxyatractyloside (CATR). Proton transporter activity is inhibited by ADP:ATP antiporter activity. In terms of biological role, ADP:ATP antiporter that mediates import of ADP into the mitochondrial matrix for ATP synthesis, and export of ATP out to fuel the cell. Cycles between the cytoplasmic-open state (c-state) and the matrix-open state (m-state): operates by the alternating access mechanism with a single substrate-binding site intermittently exposed to either the cytosolic (c-state) or matrix (m-state) side of the inner mitochondrial membrane. In addition to its ADP:ATP antiporter activity, also involved in mitochondrial uncoupling and mitochondrial permeability transition pore (mPTP) activity. Plays a role in mitochondrial uncoupling by acting as a proton transporter: proton transport uncouples the proton flows via the electron transport chain and ATP synthase to reduce the efficiency of ATP production and cause mitochondrial thermogenesis. Proton transporter activity is inhibited by ADP:ATP antiporter activity, suggesting that SLC25A5/ANT2 acts as a master regulator of mitochondrial energy output by maintaining a delicate balance between ATP production (ADP:ATP antiporter activity) and thermogenesis (proton transporter activity). Proton transporter activity requires free fatty acids as cofactor, but does not transport it. Probably mediates mitochondrial uncoupling in tissues that do not express UCP1. Also plays a key role in mPTP opening, a non-specific pore that enables free passage of the mitochondrial membranes to solutes of up to 1.5 kDa, and which contributes to cell death. It is however unclear if SLC25A5/ANT2 constitutes a pore-forming component of mPTP or regulates it. Acts as a regulator of mitophagy independently of ADP:ATP antiporter activity: promotes mitophagy via interaction with TIMM44, leading to inhibit the presequence translocase TIMM23, thereby promoting stabilization of PINK1. As part of the mitotic spindle-associated MMXD complex it may play a role in chromosome segregation. The protein is ADP/ATP translocase 2 of Tachyglossus aculeatus aculeatus (Southeast Australian short-beaked echidna).